A 95-amino-acid chain; its full sequence is Large ribosomal subunit protein bL25 (95 aa).

It belongs to the bacterial ribosomal protein bL25 family. In terms of assembly, part of the 50S ribosomal subunit; part of the 5S rRNA/L5/L18/L25 subcomplex. Contacts the 5S rRNA. Binds to the 5S rRNA independently of L5 and L18.

This is one of the proteins that binds to the 5S RNA in the ribosome where it forms part of the central protuberance. The chain is Large ribosomal subunit protein bL25 from Yersinia enterocolitica serotype O:8 / biotype 1B (strain NCTC 13174 / 8081).